The primary structure comprises 569 residues: Santalene synthase (569 aa).

Positions 284, 321, 325, and 460 each coordinate (2E)-geranyl diphosphate. Positions 321 and 325 each coordinate Mg(2+). The DDXXD motif motif lies at 321–325; it reads DDGYD. N463, T467, and E471 together coordinate Mg(2+).

This sequence belongs to the terpene synthase family. Tpsb subfamily. The cofactor is Mg(2+). Mn(2+) serves as cofactor.

The enzyme catalyses (2E,6E)-farnesyl diphosphate = (1S,5S,6R)-alpha-bergamotene + diphosphate. It carries out the reaction (2E,6E)-farnesyl diphosphate = (+)-alpha-santalene + diphosphate. The catalysed reaction is (2E,6E)-farnesyl diphosphate = (-)-beta-santalene + diphosphate. Catalyzes a mixture of sesquiterpenoids from (2E,6E)-farnesyl diphosphate in fragrance biosynthesis. Catalyzes the formation of alpha-santalene, beta-santalene, epi-beta-santalene and exo-alpha-bergamotene, as well as traces of alpha-farnesene and beta-farnesene. Also acts with (Z,Z)-farnesyl diphosphate isomer, producing alpha-endo-bergamotene, alpha-santalene, (Z)-beta-farnesene, epi-beta-santalene, and beta-santalene. The polypeptide is Santalene synthase (Santalum album (White sandalwood)).